We begin with the raw amino-acid sequence, 269 residues long: Mitochondrial S-adenosylmethionine carrier protein (269 aa).

Solcar repeat units follow at residues 4–77, 85–167, and 176–264; these read REFC…AKQL, LSPI…LKDL, and VDSW…VRTL. Transmembrane regions (helical) follow at residues 5–25, 49–69, 84–104, 141–161, 181–201, and 237–257; these read EFCA…LILF, IYAG…AFFV, YLSP…ACLI, RGYK…FPLW, SAVC…PLDV, and FAGV…FLGA.

The protein belongs to the mitochondrial carrier (TC 2.A.29) family.

Its subcellular location is the mitochondrion inner membrane. The catalysed reaction is S-adenosyl-L-homocysteine(out) + S-adenosyl-L-methionine(in) = S-adenosyl-L-homocysteine(in) + S-adenosyl-L-methionine(out). Functionally, mitochondrial S-adenosyl-L-methionine/S-adenosyl-L-homocysteine antiporter. Mediates the exchange of cytosolic S-adenosyl-L-methionine, the predominant methyl-group donor for macromolecule methylation processes, for mitochondrial S-adenosylhomocysteine(SAH), a by-product of methylation reactions. The chain is Mitochondrial S-adenosylmethionine carrier protein (slc25a26) from Xenopus tropicalis (Western clawed frog).